The primary structure comprises 85 residues: Large ribosomal subunit protein bL27 (85 aa).

Positions 1 to 22 (MAHKKAGGSTRNGRDSEAKRMG) are disordered.

It belongs to the bacterial ribosomal protein bL27 family.

In Escherichia coli O6:K15:H31 (strain 536 / UPEC), this protein is Large ribosomal subunit protein bL27.